The following is a 165-amino-acid chain: Chorismate pyruvate-lyase (165 aa).

Positions 35, 77, 115, and 156 each coordinate substrate.

Belongs to the UbiC family. In terms of assembly, monomer.

It localises to the cytoplasm. It catalyses the reaction chorismate = 4-hydroxybenzoate + pyruvate. Its pathway is cofactor biosynthesis; ubiquinone biosynthesis. Removes the pyruvyl group from chorismate, with concomitant aromatization of the ring, to provide 4-hydroxybenzoate (4HB) for the ubiquinone pathway. The protein is Chorismate pyruvate-lyase of Salmonella schwarzengrund (strain CVM19633).